The chain runs to 580 residues: Benzoate--CoA ligase, peroxisomal (580 aa).

The Microbody targeting signal signature appears at 578–580; the sequence is SRL.

It belongs to the ATP-dependent AMP-binding enzyme family.

Its subcellular location is the peroxisome. The catalysed reaction is benzoate + ATP + CoA = benzoyl-CoA + AMP + diphosphate. Functionally, benzoate--CoA ligase involved in benzoyloxyglucosinolate biosynthesis in seeds. Glucosinolates are secondary metabolites involved in pathogen and insect defense of cruciferous plants. The protein is Benzoate--CoA ligase, peroxisomal (AAE20) of Arabidopsis thaliana (Mouse-ear cress).